The chain runs to 374 residues: Ribosomal RNA large subunit methyltransferase G (374 aa).

The protein belongs to the methyltransferase superfamily. RlmG family.

The protein localises to the cytoplasm. The catalysed reaction is guanosine(1835) in 23S rRNA + S-adenosyl-L-methionine = N(2)-methylguanosine(1835) in 23S rRNA + S-adenosyl-L-homocysteine + H(+). Its function is as follows. Specifically methylates the guanine in position 1835 (m2G1835) of 23S rRNA. The polypeptide is Ribosomal RNA large subunit methyltransferase G (Pseudomonas syringae pv. syringae (strain B728a)).